The following is a 239-amino-acid chain: Glucosamine-6-phosphate deaminase (239 aa).

D62 serves as the catalytic Proton acceptor; for enolization step. The For ring-opening step role is filled by N128. Catalysis depends on H130, which acts as the Proton acceptor; for ring-opening step. The active-site For ring-opening step is the E135.

The protein belongs to the glucosamine/galactosamine-6-phosphate isomerase family. NagB subfamily.

The catalysed reaction is alpha-D-glucosamine 6-phosphate + H2O = beta-D-fructose 6-phosphate + NH4(+). The protein operates within amino-sugar metabolism; N-acetylneuraminate degradation; D-fructose 6-phosphate from N-acetylneuraminate: step 5/5. Its function is as follows. Catalyzes the reversible isomerization-deamination of glucosamine 6-phosphate (GlcN6P) to form fructose 6-phosphate (Fru6P) and ammonium ion. The polypeptide is Glucosamine-6-phosphate deaminase (Lactobacillus helveticus (strain DPC 4571)).